The primary structure comprises 253 residues: Ribosomal RNA small subunit methyltransferase J (253 aa).

Residues 98–99, 114–115, 150–151, and Asp-172 each bind S-adenosyl-L-methionine; these read RD, ER, and SS.

It belongs to the methyltransferase superfamily. RsmJ family.

It is found in the cytoplasm. The catalysed reaction is guanosine(1516) in 16S rRNA + S-adenosyl-L-methionine = N(2)-methylguanosine(1516) in 16S rRNA + S-adenosyl-L-homocysteine + H(+). In terms of biological role, specifically methylates the guanosine in position 1516 of 16S rRNA. This Shewanella pealeana (strain ATCC 700345 / ANG-SQ1) protein is Ribosomal RNA small subunit methyltransferase J.